A 336-amino-acid chain; its full sequence is RHOMBOID-like protein 12, mitochondrial (336 aa).

A mitochondrion-targeting transit peptide spans 1–85 (MKAIFNRRVV…RGFFASALGN (85 aa)). 6 helical membrane-spanning segments follow: residues 135–155 (VVLG…VFNQ), 185–205 (IDIG…TSIA), 216–236 (LYLA…AYMA), 254–274 (PGLG…FLHP), 276–296 (ATLY…IFLI), and 307–327 (NSNI…IAWA). Ser259 acts as the Nucleophile in catalysis. The Charge relay system role is filled by His315.

Belongs to the peptidase S54 family.

It is found in the mitochondrion membrane. Probable rhomboid-type serine protease that catalyzes intramembrane proteolysis. Unable to cleave either of the yeast Pcp1 substrates in yeast cells. The sequence is that of RHOMBOID-like protein 12, mitochondrial from Arabidopsis thaliana (Mouse-ear cress).